The following is a 253-amino-acid chain: Ice-binding protein (253 aa).

The signal sequence occupies residues 1-27; sequence MKTLISNSKKVLIPLIMGSIFAGNVMA. A disulfide bond links Cys-75 and Cys-93. 2 short sequence motifs (ice-binding site motif (T-A/G-X-T/N)) span residues 220-223 and 232-235; these read TGTT and TAVT.

Belongs to the ice-binding protein family.

The protein resides in the secreted. Its function is as follows. Binds to the surface of ice crystals and inhibits their growth. Has ice recrystallization inhibition (RI) activity (the ability to prevent the formation of larger grains of ice at the expense of smaller grains), which may protect membranes from freezing injury. Has high thermal hysteresis (TH) activity, which is the ability to lower the freezing point of an aqueous solution below its melting point, and thus the freezing of the cell fluid can be prevented protecting the organism from ice damage. The TH activity of this protein is 3.8 degrees Celsius at 14 mM. This Colwellia sp protein is Ice-binding protein.